The primary structure comprises 466 residues: Neuronal acetylcholine receptor subunit non-alpha-3 (466 aa).

Residues 1–28 (MKLQISGLLLVTAVAYATIEAPEEFVSL) form the signal peptide. Over 29-235 (AEMEDTLLRN…VTYSFILKRL (207 aa)) the chain is Extracellular. N54, N141, N169, and N208 each carry an N-linked (GlcNAc...) asparagine glycan. A disulfide bond links C156 and C170. A run of 3 helical transmembrane segments spans residues 236–260 (PLFY…VFYL), 268–285 (LLLS…LLVI), and 302–323 (YLLF…VINV). Residues 324–438 (HHRSSATYHP…WKFVAQVLDR (115 aa)) lie on the Cytoplasmic side of the membrane. A helical membrane pass occupies residues 439-456 (IFLWVFLTASVLGTILIF).

Belongs to the ligand-gated ion channel (TC 1.A.9) family. Acetylcholine receptor (TC 1.A.9.1) subfamily. Neuronal AChR seems to be composed of two different type of subunits: alpha and non-alpha (beta). As to expression, retina, tectum and brain.

Its subcellular location is the postsynaptic cell membrane. The protein localises to the cell membrane. Its function is as follows. After binding acetylcholine, the AChR responds by an extensive change in conformation that affects all subunits and leads to opening of an ion-conducting channel across the plasma membrane. In Carassius auratus (Goldfish), this protein is Neuronal acetylcholine receptor subunit non-alpha-3.